Consider the following 277-residue polypeptide: Phosphatidylserine decarboxylase proenzyme (277 aa).

Active-site charge relay system; for autoendoproteolytic cleavage activity residues include aspartate 88, histidine 144, and serine 242. Residue serine 242 is the Schiff-base intermediate with substrate; via pyruvic acid; for decarboxylase activity of the active site. Residue serine 242 is modified to Pyruvic acid (Ser); by autocatalysis.

This sequence belongs to the phosphatidylserine decarboxylase family. PSD-B subfamily. Prokaryotic type I sub-subfamily. Heterodimer of a large membrane-associated beta subunit and a small pyruvoyl-containing alpha subunit. The cofactor is pyruvate. Is synthesized initially as an inactive proenzyme. Formation of the active enzyme involves a self-maturation process in which the active site pyruvoyl group is generated from an internal serine residue via an autocatalytic post-translational modification. Two non-identical subunits are generated from the proenzyme in this reaction, and the pyruvate is formed at the N-terminus of the alpha chain, which is derived from the carboxyl end of the proenzyme. The autoendoproteolytic cleavage occurs by a canonical serine protease mechanism, in which the side chain hydroxyl group of the serine supplies its oxygen atom to form the C-terminus of the beta chain, while the remainder of the serine residue undergoes an oxidative deamination to produce ammonia and the pyruvoyl prosthetic group on the alpha chain. During this reaction, the Ser that is part of the protease active site of the proenzyme becomes the pyruvoyl prosthetic group, which constitutes an essential element of the active site of the mature decarboxylase.

The protein localises to the cell membrane. It carries out the reaction a 1,2-diacyl-sn-glycero-3-phospho-L-serine + H(+) = a 1,2-diacyl-sn-glycero-3-phosphoethanolamine + CO2. Its pathway is phospholipid metabolism; phosphatidylethanolamine biosynthesis; phosphatidylethanolamine from CDP-diacylglycerol: step 2/2. Functionally, catalyzes the formation of phosphatidylethanolamine (PtdEtn) from phosphatidylserine (PtdSer). The protein is Phosphatidylserine decarboxylase proenzyme of Psychrobacter arcticus (strain DSM 17307 / VKM B-2377 / 273-4).